The primary structure comprises 428 residues: Hemagglutinin-esterase (428 aa).

The N-terminal stretch at 1–19 (MCIAMAPRTLLLLIXCQLV) is a signal peptide. The segment at 9–129 (TLLLLIXCQL…DNKRWMGNKA (121 aa)) is esterase domain 1. Residues 20-404 (FGFNEPLNIV…PVCIYDPLPV (385 aa)) lie on the Virion surface side of the membrane. Catalysis depends on Ser-42, which acts as the Nucleophile. Cysteines 46 and 67 form a disulfide. 5 N-linked (GlcNAc...) asparagine; by host glycosylation sites follow: Asn-91, Asn-149, Asn-193, Asn-243, and Asn-313. An intrachain disulfide couples Cys-115 to Cys-164. Positions 130 to 278 (RFYARVYEKM…GNYKAVSLEY (149 aa)) are receptor binding. Cystine bridges form between Cys-199/Cys-288 and Cys-207/Cys-261. Residues 279 to 392 (LLSLPSKAIC…HCPTAANIGY (114 aa)) form an esterase domain 2 region. A disulfide bridge links Cys-319 with Cys-324. N-linked (GlcNAc...) asparagine; by host glycans are attached at residues Asn-328 and Asn-332. Catalysis depends on charge relay system residues Asp-339 and His-342. 2 N-linked (GlcNAc...) asparagine; by host glycosylation sites follow: Asn-357 and Asn-371. Cys-360 and Cys-384 are joined by a disulfide. The helical transmembrane segment at 405 to 425 (ILLGVLLGIAVLIIVFLNVLF) threads the bilayer. Residues 426–428 (YDG) are Intravirion-facing.

This sequence belongs to the influenza type C/coronaviruses hemagglutinin-esterase family. In terms of assembly, homodimer; disulfide-linked. Forms a complex with the M protein in the pre-Golgi. Associates then with S-M complex to form a ternary complex S-M-HE. Post-translationally, N-glycosylated in the RER. N-glycosylated in the host RER.

The protein localises to the virion membrane. It is found in the host cell membrane. The catalysed reaction is N-acetyl-9-O-acetylneuraminate + H2O = N-acetylneuraminate + acetate + H(+). The enzyme catalyses N-acetyl-4-O-acetylneuraminate + H2O = N-acetylneuraminate + acetate + H(+). Functionally, structural protein that makes short spikes at the surface of the virus. Contains receptor binding and receptor-destroying activities. Mediates de-O-acetylation of N-acetyl-4-O-acetylneuraminic acid, which is probably the receptor determinant recognized by the virus on the surface of erythrocytes and susceptible cells. This receptor-destroying activity is important for virus release as it probably helps preventing self-aggregation and ensures the efficient spread of the progeny virus from cell to cell. May serve as a secondary viral attachment protein for initiating infection, the spike protein being the major one. May become a target for both the humoral and the cellular branches of the immune system. The protein is Hemagglutinin-esterase of Mus musculus (Mouse).